The primary structure comprises 311 residues: tRNA-cytidine(32) 2-sulfurtransferase (311 aa).

The PP-loop motif motif lies at 47–52 (SGGKDS). The [4Fe-4S] cluster site is built by Cys122, Cys125, and Cys213.

It belongs to the TtcA family. Homodimer. The cofactor is Mg(2+). [4Fe-4S] cluster is required as a cofactor.

The protein localises to the cytoplasm. It catalyses the reaction cytidine(32) in tRNA + S-sulfanyl-L-cysteinyl-[cysteine desulfurase] + AH2 + ATP = 2-thiocytidine(32) in tRNA + L-cysteinyl-[cysteine desulfurase] + A + AMP + diphosphate + H(+). Its pathway is tRNA modification. Its function is as follows. Catalyzes the ATP-dependent 2-thiolation of cytidine in position 32 of tRNA, to form 2-thiocytidine (s(2)C32). The sulfur atoms are provided by the cysteine/cysteine desulfurase (IscS) system. The protein is tRNA-cytidine(32) 2-sulfurtransferase of Salmonella arizonae (strain ATCC BAA-731 / CDC346-86 / RSK2980).